Reading from the N-terminus, the 301-residue chain is Acetylglutamate kinase (301 aa).

Substrate is bound by residues 68 to 69 (GG), arginine 90, and asparagine 195.

The protein belongs to the acetylglutamate kinase family. ArgB subfamily.

The protein resides in the cytoplasm. The enzyme catalyses N-acetyl-L-glutamate + ATP = N-acetyl-L-glutamyl 5-phosphate + ADP. It functions in the pathway amino-acid biosynthesis; L-arginine biosynthesis; N(2)-acetyl-L-ornithine from L-glutamate: step 2/4. Catalyzes the ATP-dependent phosphorylation of N-acetyl-L-glutamate. The sequence is that of Acetylglutamate kinase from Pseudomonas paraeruginosa (strain DSM 24068 / PA7) (Pseudomonas aeruginosa (strain PA7)).